Here is a 606-residue protein sequence, read N- to C-terminus: Radial spoke head protein 3 homolog (606 aa).

Residues 1–103 (MARSEARRQA…NSPEAPPLDG (103 aa)) form a disordered region. A compositionally biased stretch (basic and acidic residues) spans 15–46 (PRAVPEERALRERRQPRPRREPLESGAGDHRR). The residue at position 331 (threonine 331) is a Phosphothreonine; by MAPK1. Residues 393-429 (AYEELRNIELAEVQRLEEQERRHREEKERRKQQQWQV) adopt a coiled-coil conformation. Positions 520 to 606 (EGRHASVRPE…KSSKREELSQ (87 aa)) are disordered. Residues 547-556 (SQDQGASQAQ) are compositionally biased toward polar residues. A coiled-coil region spans residues 572-604 (ARYAERVSSQERRLAEENDELTEMRKSSKREEL). The span at 573–606 (RYAERVSSQERRLAEENDELTEMRKSSKREELSQ) shows a compositional bias: basic and acidic residues.

It belongs to the flagellar radial spoke RSP3 family. In terms of assembly, component of the axonemal radial spoke 1 (RS1) and 2 (RS2) complexes, at least composed of spoke head proteins RSPH1, RSPH3, RSPH9 and the cilia-specific component RSPH4A or sperm-specific component RSPH6A, spoke stalk proteins RSPH14, DNAJB13, DYDC1, ROPN1L and NME5, and the RS1 complex-specific anchor protein IQUB. Interacts with IQUB. Interacts with phosphorylated MAPK1. Interacts with MEK1. Interacts with PKA regulatory subunits PRKAR1A and PRKAR1B. Interacts with RSPH1. Interacts with RSPH4A. Interacts with RSPH6A. Interacts with RSPH9. Interacts with LRRC23.

It is found in the cytoplasm. It localises to the cytoskeleton. Its subcellular location is the cilium axoneme. The protein localises to the flagellum axoneme. Functions as part of axonemal radial spoke complexes that play an important part in the motility of sperm and cilia. Functions as a protein kinase A-anchoring protein that scaffolds the cAMP-dependent protein kinase holoenzyme. May serve as a point of convergence for MAPK and PKA signaling in cilia. The protein is Radial spoke head protein 3 homolog (RSPH3) of Bos taurus (Bovine).